The chain runs to 311 residues: D-allose-binding periplasmic protein (311 aa).

Residues 1-23 (MNKYLKYFSGTLVGLMLSTSAFA) form the signal peptide.

Belongs to the bacterial solute-binding protein 2 family.

Its subcellular location is the periplasm. Functionally, part of the binding-protein-dependent transport system AlsBAC for D-allose. This Escherichia coli (strain K12) protein is D-allose-binding periplasmic protein (alsB).